A 236-amino-acid chain; its full sequence is Phosphoribosylaminoimidazole-succinocarboxamide synthase (236 aa).

This sequence belongs to the SAICAR synthetase family.

The catalysed reaction is 5-amino-1-(5-phospho-D-ribosyl)imidazole-4-carboxylate + L-aspartate + ATP = (2S)-2-[5-amino-1-(5-phospho-beta-D-ribosyl)imidazole-4-carboxamido]succinate + ADP + phosphate + 2 H(+). It participates in purine metabolism; IMP biosynthesis via de novo pathway; 5-amino-1-(5-phospho-D-ribosyl)imidazole-4-carboxamide from 5-amino-1-(5-phospho-D-ribosyl)imidazole-4-carboxylate: step 1/2. This is Phosphoribosylaminoimidazole-succinocarboxamide synthase from Pseudomonas putida (strain GB-1).